We begin with the raw amino-acid sequence, 347 residues long: Methylthioribose-1-phosphate isomerase (347 aa).

Substrate is bound by residues 47–49 (RGA), Arg-90, and Gln-199. The active-site Proton donor is Asp-240. 250 to 251 (NK) contributes to the substrate binding site.

It belongs to the eIF-2B alpha/beta/delta subunits family. MtnA subfamily.

The enzyme catalyses 5-(methylsulfanyl)-alpha-D-ribose 1-phosphate = 5-(methylsulfanyl)-D-ribulose 1-phosphate. The protein operates within amino-acid biosynthesis; L-methionine biosynthesis via salvage pathway; L-methionine from S-methyl-5-thio-alpha-D-ribose 1-phosphate: step 1/6. Its function is as follows. Catalyzes the interconversion of methylthioribose-1-phosphate (MTR-1-P) into methylthioribulose-1-phosphate (MTRu-1-P). The chain is Methylthioribose-1-phosphate isomerase from Natranaerobius thermophilus (strain ATCC BAA-1301 / DSM 18059 / JW/NM-WN-LF).